A 197-amino-acid chain; its full sequence is ATP-dependent Clp protease proteolytic subunit 3 (197 aa).

Ser-96 serves as the catalytic Nucleophile. Residue His-121 is part of the active site.

The protein belongs to the peptidase S14 family. As to quaternary structure, fourteen ClpP subunits assemble into 2 heptameric rings which stack back to back to give a disk-like structure with a central cavity, resembling the structure of eukaryotic proteasomes.

The protein resides in the cytoplasm. It catalyses the reaction Hydrolysis of proteins to small peptides in the presence of ATP and magnesium. alpha-casein is the usual test substrate. In the absence of ATP, only oligopeptides shorter than five residues are hydrolyzed (such as succinyl-Leu-Tyr-|-NHMec, and Leu-Tyr-Leu-|-Tyr-Trp, in which cleavage of the -Tyr-|-Leu- and -Tyr-|-Trp bonds also occurs).. Its function is as follows. Cleaves peptides in various proteins in a process that requires ATP hydrolysis. Has a chymotrypsin-like activity. Plays a major role in the degradation of misfolded proteins. The protein is ATP-dependent Clp protease proteolytic subunit 3 of Prochlorococcus marinus (strain MIT 9313).